The following is a 269-amino-acid chain: Putative 12-oxophytodienoate reductase-like protein 2A (269 aa).

FMN contacts are provided by residues 28–30 (PLT) and Gln103. 175-178 (HGAH) contributes to the substrate binding site. Tyr180 (proton donor) is an active-site residue. Residue Arg227 participates in FMN binding.

The protein belongs to the NADH:flavin oxidoreductase/NADH oxidase family. FMN serves as cofactor.

In terms of biological role, putative oxophytodienoate reductase that may be involved in the biosynthesis or metabolism of oxylipin signaling molecules. The sequence is that of Putative 12-oxophytodienoate reductase-like protein 2A from Arabidopsis thaliana (Mouse-ear cress).